Consider the following 81-residue polypeptide: MSHKVKIYDTCIGCTQCVRACPLDVLEMVPWDGCKASQIASSPRTEDCVGCKRCETACPTDFLSIRVYLGAETTRSMGLAY.

2 consecutive 4Fe-4S ferredoxin-type domains span residues 1–31 (MSHKVKIYDTCIGCTQCVRACPLDVLEMVPW) and 39–68 (IASSPRTEDCVGCKRCETACPTDFLSIRVY). Residues cysteine 11, cysteine 14, cysteine 17, cysteine 21, cysteine 48, cysteine 51, cysteine 54, and cysteine 58 each coordinate [4Fe-4S] cluster.

As to quaternary structure, the cyanobacterial PSI reaction center is composed of one copy each of PsaA,B,C,D,E,F,I,J,K,L,M and X, and forms trimeric complexes. The cofactor is [4Fe-4S] cluster.

Its subcellular location is the cellular thylakoid membrane. It carries out the reaction reduced [plastocyanin] + hnu + oxidized [2Fe-2S]-[ferredoxin] = oxidized [plastocyanin] + reduced [2Fe-2S]-[ferredoxin]. Its function is as follows. Apoprotein for the two 4Fe-4S centers FA and FB of photosystem I (PSI); essential for photochemical activity. FB is the terminal electron acceptor of PSI, donating electrons to ferredoxin. The C-terminus interacts with PsaA/B/D and helps assemble the protein into the PSI complex. Required for binding of PsaD and PsaE to PSI. PSI is a plastocyanin/cytochrome c6-ferredoxin oxidoreductase, converting photonic excitation into a charge separation, which transfers an electron from the donor P700 chlorophyll pair to the spectroscopically characterized acceptors A0, A1, FX, FA and FB in turn. The polypeptide is Photosystem I iron-sulfur center (Crocosphaera subtropica (strain ATCC 51142 / BH68) (Cyanothece sp. (strain ATCC 51142))).